The following is a 446-amino-acid chain: Tubulin alpha chain-like 3 (446 aa).

The short motif at 1 to 4 (MREC) is the MREC motif element. The GTP site is built by Q11, E78, S147, G151, T152, T186, N213, and N235. E78 provides a ligand contact to Mg(2+). Residue E261 is part of the active site.

Belongs to the tubulin family. As to quaternary structure, dimer of alpha and beta chains. A typical microtubule is a hollow water-filled tube with an outer diameter of 25 nm and an inner diameter of 15 nM. Alpha-beta heterodimers associate head-to-tail to form protofilaments running lengthwise along the microtubule wall with the beta-tubulin subunit facing the microtubule plus end conferring a structural polarity. Microtubules usually have 13 protofilaments but different protofilament numbers can be found in some organisms and specialized cells. The cofactor is Mg(2+). Post-translationally, some glutamate residues at the C-terminus are polyglutamylated, resulting in polyglutamate chains on the gamma-carboxyl group. Polyglutamylation plays a key role in microtubule severing by spastin (SPAST). SPAST preferentially recognizes and acts on microtubules decorated with short polyglutamate tails: severing activity by SPAST increases as the number of glutamates per tubulin rises from one to eight, but decreases beyond this glutamylation threshold. Glutamylation is also involved in cilia motility. Some glutamate residues at the C-terminus are monoglycylated but not polyglycylated due to the absence of functional TTLL10 in human. Monoglycylation is mainly limited to tubulin incorporated into cilia and flagella axonemes, which is required for their stability and maintenance. Flagella glycylation controls sperm motility. Both polyglutamylation and monoglycylation can coexist on the same protein on adjacent residues, and lowering glycylation levels increases polyglutamylation, and reciprocally.

It localises to the cytoplasm. Its subcellular location is the cytoskeleton. It catalyses the reaction GTP + H2O = GDP + phosphate + H(+). In terms of biological role, tubulin is the major constituent of microtubules, a cylinder consisting of laterally associated linear protofilaments composed of alpha- and beta-tubulin heterodimers. Microtubules grow by the addition of GTP-tubulin dimers to the microtubule end, where a stabilizing cap forms. Below the cap, tubulin dimers are in GDP-bound state, owing to GTPase activity of alpha-tubulin. The sequence is that of Tubulin alpha chain-like 3 (TUBAL3) from Homo sapiens (Human).